A 62-amino-acid polypeptide reads, in one-letter code: Large ribosomal subunit protein uL30 (62 aa).

This sequence belongs to the universal ribosomal protein uL30 family. Part of the 50S ribosomal subunit.

In Gluconobacter oxydans (strain 621H) (Gluconobacter suboxydans), this protein is Large ribosomal subunit protein uL30.